Consider the following 76-residue polypeptide: Large ribosomal subunit protein uL29 (76 aa).

This sequence belongs to the universal ribosomal protein uL29 family.

This chain is Large ribosomal subunit protein uL29, found in Gloeothece citriformis (strain PCC 7424) (Cyanothece sp. (strain PCC 7424)).